The following is a 295-amino-acid chain: Protein NEOXANTHIN-DEFICIENT 1 (295 aa).

The tract at residues 221–251 (PAKVSGPSESDADKENSSEDQSSNVESVSRV) is disordered.

In terms of biological role, required for neoxanthin biosynthesis. Probably not involved directly in the enzymatic conversion of violaxanthin to neoxanthin. Is necessary but not sufficient for neoxanthin synthesis. Seems not required for abscisic acid (ABA) biosynthesis in response to drought stress. This chain is Protein NEOXANTHIN-DEFICIENT 1, found in Solanum lycopersicum (Tomato).